Here is a 142-residue protein sequence, read N- to C-terminus: Large ribosomal subunit protein uL23 (142 aa).

Residue Lys-61 forms a Glycyl lysine isopeptide (Lys-Gly) (interchain with G-Cter in SUMO) linkage.

The protein belongs to the universal ribosomal protein uL23 family. In terms of assembly, component of the large ribosomal subunit (LSU). Mature yeast ribosomes consist of a small (40S) and a large (60S) subunit. The 40S small subunit contains 1 molecule of ribosomal RNA (18S rRNA) and 33 different proteins (encoded by 57 genes). The large 60S subunit contains 3 rRNA molecules (25S, 5.8S and 5S rRNA) and 46 different proteins (encoded by 81 genes). uL23 is associated with the polypeptide exit tunnel.

The protein resides in the cytoplasm. Component of the ribosome, a large ribonucleoprotein complex responsible for the synthesis of proteins in the cell. The small ribosomal subunit (SSU) binds messenger RNAs (mRNAs) and translates the encoded message by selecting cognate aminoacyl-transfer RNA (tRNA) molecules. The large subunit (LSU) contains the ribosomal catalytic site termed the peptidyl transferase center (PTC), which catalyzes the formation of peptide bonds, thereby polymerizing the amino acids delivered by tRNAs into a polypeptide chain. The nascent polypeptides leave the ribosome through a tunnel in the LSU and interact with protein factors that function in enzymatic processing, targeting, and the membrane insertion of nascent chains at the exit of the ribosomal tunnel. uL23 is a major component of the universal docking site for these factors at the polypeptide exit tunnel. The sequence is that of Large ribosomal subunit protein uL23 from Saccharomyces cerevisiae (strain ATCC 204508 / S288c) (Baker's yeast).